A 384-amino-acid polypeptide reads, in one-letter code: Prokineticin receptor 2 (384 aa).

The Extracellular segment spans residues 1-54; that stretch reads MAAQNGNTSFTPNFNPPQDHASSLSFNFSYGDYDLPMDEDEDMTKTRTFFAAKI. Asn7 and Asn27 each carry an N-linked (GlcNAc...) asparagine glycan. Residues 55-75 traverse the membrane as a helical segment; that stretch reads VIGIALAGIMLVCGIGNFVFI. The Cytoplasmic portion of the chain corresponds to 76–89; it reads AALTRYKKLRNLTN. The chain crosses the membrane as a helical span at residues 90-110; the sequence is LLIANLAISDFLVAIICCPFE. Residues 111–136 are Extracellular-facing; it reads MDYYVVRQLSWEHGHVLCASVNYLRT. A disulfide bond links Cys128 and Cys208. Residues 137–157 traverse the membrane as a helical segment; the sequence is VSLYVSTNALLAIAIDRYLAI. At 158 to 171 the chain is on the cytoplasmic side; that stretch reads VHPLKPRMNYQTAS. The helical transmembrane segment at 172-192 threads the bilayer; it reads FLIALVWMVSILIAIPSAYFA. Over 193–223 the chain is Extracellular; the sequence is TETVLFIVKSQEKIFCGQIWPVDQQLYYKSY. Residues 224-244 traverse the membrane as a helical segment; sequence FLFIFGVEFVGPVVTMTLCYA. Over 245 to 273 the chain is Cytoplasmic; that stretch reads RISRELWFKAVPGFQTEQIRKRLRCRRKT. The helical transmembrane segment at 274-294 threads the bilayer; it reads VLVLMCILTAYVLCWAPFYGF. The Extracellular portion of the chain corresponds to 295–313; the sequence is TIVRDFFPTVFVKEKHYLT. The helical transmembrane segment at 314 to 334 threads the bilayer; sequence AFYVVECIAMSNSMINTVCFV. Topologically, residues 335–384 are cytoplasmic; sequence TVKNNTMKYFKKMMLLHWRPSQRGSKSSADLDLRTNGVPTTEEVDCIRLK.

It belongs to the G-protein coupled receptor 1 family. As to quaternary structure, homodimer. In terms of tissue distribution, expressed in the ileocecum, thyroid gland, pituitary gland, salivary gland, adrenal gland, testis, ovary and brain.

It localises to the cell membrane. Receptor for prokineticin 2. Exclusively coupled to the G(q) subclass of heteromeric G proteins. Activation leads to mobilization of calcium, stimulation of phosphoinositide turnover and activation of p44/p42 mitogen-activated protein kinase. This is Prokineticin receptor 2 (PROKR2) from Homo sapiens (Human).